We begin with the raw amino-acid sequence, 709 residues long: Polyribonucleotide nucleotidyltransferase (709 aa).

Mg(2+) is bound by residues Asp-485 and Asp-491. Residues 552-611 (PRIHTMKIDPKKIKDVIGKGGATIRALTEETGTSIDIDDDGTVKIAATDNNAAKRVMERI) enclose the KH domain. Positions 621–689 (NAIYKGKVTR…RQGRIRLTMK (69 aa)) constitute an S1 motif domain.

Belongs to the polyribonucleotide nucleotidyltransferase family. As to quaternary structure, component of the RNA degradosome, which is a multiprotein complex involved in RNA processing and mRNA degradation. Requires Mg(2+) as cofactor.

It is found in the cytoplasm. It catalyses the reaction RNA(n+1) + phosphate = RNA(n) + a ribonucleoside 5'-diphosphate. Its function is as follows. Involved in mRNA degradation. Catalyzes the phosphorolysis of single-stranded polyribonucleotides processively in the 3'- to 5'-direction. This Glaesserella parasuis serovar 5 (strain SH0165) (Haemophilus parasuis) protein is Polyribonucleotide nucleotidyltransferase.